A 570-amino-acid polypeptide reads, in one-letter code: Proline--tRNA ligase (570 aa).

This sequence belongs to the class-II aminoacyl-tRNA synthetase family. ProS type 1 subfamily. As to quaternary structure, homodimer.

It is found in the cytoplasm. The catalysed reaction is tRNA(Pro) + L-proline + ATP = L-prolyl-tRNA(Pro) + AMP + diphosphate. In terms of biological role, catalyzes the attachment of proline to tRNA(Pro) in a two-step reaction: proline is first activated by ATP to form Pro-AMP and then transferred to the acceptor end of tRNA(Pro). As ProRS can inadvertently accommodate and process non-cognate amino acids such as alanine and cysteine, to avoid such errors it has two additional distinct editing activities against alanine. One activity is designated as 'pretransfer' editing and involves the tRNA(Pro)-independent hydrolysis of activated Ala-AMP. The other activity is designated 'posttransfer' editing and involves deacylation of mischarged Ala-tRNA(Pro). The misacylated Cys-tRNA(Pro) is not edited by ProRS. The sequence is that of Proline--tRNA ligase from Shewanella sp. (strain MR-7).